Here is a 779-residue protein sequence, read N- to C-terminus: Pre-mRNA-splicing factor cef-1 (779 aa).

HTH myb-type domains are found at residues 1-56 (MPVV…DPSI) and 57-106 (KKIE…DEAE). 2 DNA-binding regions (H-T-H motif) span residues 29 to 52 (WARV…NEWL) and 80 to 102 (WRTI…QRLL). Disordered regions lie at residues 113 to 192 (LGLT…ESRR), 246 to 284 (EYQR…PSVQ), 424 to 448 (TPLR…LRTP), and 497 to 525 (WELE…DRRE). Positions 127–152 (SADDVRKLRPGEVDPDPETKPARPDT) are enriched in basic and acidic residues. Residues 157 to 204 (EDEKEMLSEARARLANTQGKKAKRKARERQQEESRRLAALQKRRELKT) adopt a coiled-coil conformation. Composition is skewed to basic and acidic residues over residues 246-256 (EYQRAHFDPKK) and 263-281 (RKGE…DKDP). Positions 653 to 772 (DEEEEQISTM…EELDALTLNG (120 aa)) form a coiled coil.

Belongs to the CEF1 family. Associated with the spliceosome.

It is found in the cytoplasm. The protein resides in the nucleus. Functionally, involved in pre-mRNA splicing and cell cycle control. This Neurospora crassa (strain ATCC 24698 / 74-OR23-1A / CBS 708.71 / DSM 1257 / FGSC 987) protein is Pre-mRNA-splicing factor cef-1 (cef-1).